Consider the following 391-residue polypeptide: Succinate--CoA ligase [ADP-forming] subunit beta (391 aa).

One can recognise an ATP-grasp domain in the interval 9 to 245 (KQIFAEYGVP…LSEEDPDEVE (237 aa)). ATP-binding positions include K46, 53-55 (GRG), E99, A102, and E107. The Mg(2+) site is built by N200 and D214. Residues N265 and 322-324 (GIV) each bind substrate.

The protein belongs to the succinate/malate CoA ligase beta subunit family. As to quaternary structure, heterotetramer of two alpha and two beta subunits. Mg(2+) serves as cofactor.

The catalysed reaction is succinate + ATP + CoA = succinyl-CoA + ADP + phosphate. It catalyses the reaction GTP + succinate + CoA = succinyl-CoA + GDP + phosphate. It participates in carbohydrate metabolism; tricarboxylic acid cycle; succinate from succinyl-CoA (ligase route): step 1/1. In terms of biological role, succinyl-CoA synthetase functions in the citric acid cycle (TCA), coupling the hydrolysis of succinyl-CoA to the synthesis of either ATP or GTP and thus represents the only step of substrate-level phosphorylation in the TCA. The beta subunit provides nucleotide specificity of the enzyme and binds the substrate succinate, while the binding sites for coenzyme A and phosphate are found in the alpha subunit. The sequence is that of Succinate--CoA ligase [ADP-forming] subunit beta from Sulfurovum sp. (strain NBC37-1).